A 255-amino-acid polypeptide reads, in one-letter code: Homeobox-leucine zipper protein ATHB-23 (255 aa).

The segment at residues 68–127 (MGEKKRRLNMEQLKALEKDFELGNKLESDRKLELARALGLQPRQIAIWFQNRRARSKTKQ) is a DNA-binding region (homeobox). Residues 128–163 (LEKDYDMLKRQFESLRDENEVLQTQNQKLQAQVMAL) form a leucine-zipper region.

Belongs to the HD-ZIP homeobox family. Class I subfamily. In terms of tissue distribution, expressed in young leaves, in the adaxial domain of leaf primordia and the rib meristem. Expressed in the styles of flowers and siliques.

It localises to the nucleus. In terms of biological role, probable transcription factor. This Arabidopsis thaliana (Mouse-ear cress) protein is Homeobox-leucine zipper protein ATHB-23 (ATHB-23).